The primary structure comprises 295 residues: Probable protein phosphatase 2C 54 (295 aa).

Residues 78–289 enclose the PPM-type phosphatase domain; that stretch reads GHGVVSVMGR…ENINVIVIDL (212 aa). Aspartate 112, glycine 113, aspartate 228, and glutamate 280 together coordinate Mn(2+).

Belongs to the PP2C family. Mg(2+) is required as a cofactor. The cofactor is Mn(2+).

It carries out the reaction O-phospho-L-seryl-[protein] + H2O = L-seryl-[protein] + phosphate. It catalyses the reaction O-phospho-L-threonyl-[protein] + H2O = L-threonyl-[protein] + phosphate. In Arabidopsis thaliana (Mouse-ear cress), this protein is Probable protein phosphatase 2C 54.